A 276-amino-acid chain; its full sequence is Putative translation initiation factor eIF-2B subunit 2-like (276 aa).

This sequence belongs to the eIF-2B alpha/beta/delta subunits family. As to quaternary structure, complex of two different subunits.

Its function is as follows. Catalyzes the exchange of initiation factor 2-bound GDP for GTP. The protein is Putative translation initiation factor eIF-2B subunit 2-like of Pyrococcus furiosus (strain ATCC 43587 / DSM 3638 / JCM 8422 / Vc1).